A 234-amino-acid chain; its full sequence is uncharacterized protein (234 aa).

4 helical membrane passes run 28-48 (IVIIALIYCILHDTMSLSIIS), 67-87 (FQIFIFLISILILQLTSFDPI), 123-143 (GGVDLFILLDACLLWANSGTI), and 154-174 (LYCIFHCSFILLGLGVGGLLY).

The protein belongs to the complex I subunit 2 family.

It localises to the mitochondrion membrane. This is an uncharacterized protein from Neurospora crassa (strain ATCC 24698 / 74-OR23-1A / CBS 708.71 / DSM 1257 / FGSC 987).